The primary structure comprises 458 residues: 3-isopropylmalate dehydratase large subunit (458 aa).

Residues Cys339, Cys399, and Cys402 each coordinate [4Fe-4S] cluster.

Belongs to the aconitase/IPM isomerase family. LeuC type 1 subfamily. As to quaternary structure, heterodimer of LeuC and LeuD. [4Fe-4S] cluster serves as cofactor.

The enzyme catalyses (2R,3S)-3-isopropylmalate = (2S)-2-isopropylmalate. It functions in the pathway amino-acid biosynthesis; L-leucine biosynthesis; L-leucine from 3-methyl-2-oxobutanoate: step 2/4. Functionally, catalyzes the isomerization between 2-isopropylmalate and 3-isopropylmalate, via the formation of 2-isopropylmaleate. The sequence is that of 3-isopropylmalate dehydratase large subunit from Lactococcus lactis subsp. cremoris (strain SK11).